Here is a 252-residue protein sequence, read N- to C-terminus: 2-succinyl-6-hydroxy-2,4-cyclohexadiene-1-carboxylate synthase (252 aa).

Belongs to the AB hydrolase superfamily. MenH family. In terms of assembly, monomer.

The catalysed reaction is 5-enolpyruvoyl-6-hydroxy-2-succinyl-cyclohex-3-ene-1-carboxylate = (1R,6R)-6-hydroxy-2-succinyl-cyclohexa-2,4-diene-1-carboxylate + pyruvate. The protein operates within quinol/quinone metabolism; 1,4-dihydroxy-2-naphthoate biosynthesis; 1,4-dihydroxy-2-naphthoate from chorismate: step 3/7. It functions in the pathway quinol/quinone metabolism; menaquinone biosynthesis. Its function is as follows. Catalyzes a proton abstraction reaction that results in 2,5-elimination of pyruvate from 2-succinyl-5-enolpyruvyl-6-hydroxy-3-cyclohexene-1-carboxylate (SEPHCHC) and the formation of 2-succinyl-6-hydroxy-2,4-cyclohexadiene-1-carboxylate (SHCHC). The protein is 2-succinyl-6-hydroxy-2,4-cyclohexadiene-1-carboxylate synthase of Salmonella newport (strain SL254).